A 436-amino-acid chain; its full sequence is UPF0597 protein YhaM (436 aa).

Belongs to the UPF0597 family.

The polypeptide is UPF0597 protein YhaM (Shigella boydii serotype 4 (strain Sb227)).